We begin with the raw amino-acid sequence, 417 residues long: D-amino acid dehydrogenase (417 aa).

3 to 17 (IVVLGGGVVGVTSAW) is an FAD binding site.

It belongs to the DadA oxidoreductase family. FAD serves as cofactor.

The catalysed reaction is a D-alpha-amino acid + A + H2O = a 2-oxocarboxylate + AH2 + NH4(+). It participates in amino-acid degradation; D-alanine degradation; NH(3) and pyruvate from D-alanine: step 1/1. Functionally, oxidative deamination of D-amino acids. The protein is D-amino acid dehydrogenase of Aeromonas hydrophila subsp. hydrophila (strain ATCC 7966 / DSM 30187 / BCRC 13018 / CCUG 14551 / JCM 1027 / KCTC 2358 / NCIMB 9240 / NCTC 8049).